We begin with the raw amino-acid sequence, 459 residues long: Chromosomal replication initiator protein DnaA (459 aa).

The segment at 1–90 (MAVSLWQQCI…RPASKPAAPA (90 aa)) is domain I, interacts with DnaA modulators. Positions 75–124 (RFDIGSRPASKPAAPAASTKSPVAPAAKSPSKPSFNSNEPAATANHRSNM) are disordered. Low complexity predominate over residues 80–108 (SRPASKPAAPAASTKSPVAPAAKSPSKPS). Residues 91 to 122 (ASTKSPVAPAAKSPSKPSFNSNEPAATANHRS) form a domain II region. Residues 109 to 124 (FNSNEPAATANHRSNM) are compositionally biased toward polar residues. The interval 123-339 (NMNPTYQFDN…GALNRVIANA (217 aa)) is domain III, AAA+ region. ATP is bound by residues Gly-167, Gly-169, Lys-170, and Thr-171. The segment at 340-459 (NFTGRPITID…YANLIRTLSS (120 aa)) is domain IV, binds dsDNA.

It belongs to the DnaA family. In terms of assembly, oligomerizes as a right-handed, spiral filament on DNA at oriC.

It is found in the cytoplasm. Functionally, plays an essential role in the initiation and regulation of chromosomal replication. ATP-DnaA binds to the origin of replication (oriC) to initiate formation of the DNA replication initiation complex once per cell cycle. Binds the DnaA box (a 9 base pair repeat at the origin) and separates the double-stranded (ds)DNA. Forms a right-handed helical filament on oriC DNA; dsDNA binds to the exterior of the filament while single-stranded (ss)DNA is stabiized in the filament's interior. The ATP-DnaA-oriC complex binds and stabilizes one strand of the AT-rich DNA unwinding element (DUE), permitting loading of DNA polymerase. After initiation quickly degrades to an ADP-DnaA complex that is not apt for DNA replication. Binds acidic phospholipids. This is Chromosomal replication initiator protein DnaA from Shewanella loihica (strain ATCC BAA-1088 / PV-4).